Here is a 115-residue protein sequence, read N- to C-terminus: NAD(P)H-quinone oxidoreductase subunit M, organellar chromatophore (115 aa).

This sequence belongs to the complex I NdhM subunit family. In terms of assembly, NDH-1 can be composed of about 15 different subunits; different subcomplexes with different compositions have been identified which probably have different functions.

It localises to the plastid. It is found in the organellar chromatophore thylakoid membrane. It catalyses the reaction a plastoquinone + NADH + (n+1) H(+)(in) = a plastoquinol + NAD(+) + n H(+)(out). The catalysed reaction is a plastoquinone + NADPH + (n+1) H(+)(in) = a plastoquinol + NADP(+) + n H(+)(out). Functionally, NDH-1 shuttles electrons from an unknown electron donor, via FMN and iron-sulfur (Fe-S) centers, to quinones in the respiratory and/or the photosynthetic chain. The immediate electron acceptor for the enzyme in this species is believed to be plastoquinone. Couples the redox reaction to proton translocation, and thus conserves the redox energy in a proton gradient. The chain is NAD(P)H-quinone oxidoreductase subunit M, organellar chromatophore from Paulinella chromatophora.